Here is a 108-residue protein sequence, read N- to C-terminus: uncharacterized protein (108 aa).

The N-terminal stretch at 1–24 (MNLWEFRFGKSFLFIPNFIMKVLA) is a signal peptide.

To M.jannaschii MJ0803.

This is an uncharacterized protein from Methanocaldococcus jannaschii (strain ATCC 43067 / DSM 2661 / JAL-1 / JCM 10045 / NBRC 100440) (Methanococcus jannaschii).